Reading from the N-terminus, the 176-residue chain is RNA pyrophosphohydrolase (176 aa).

The Nudix hydrolase domain maps to 6–149 (GYRPNVGIVI…KRDVYRRVMK (144 aa)). The short motif at 38–59 (GGINPGESPEQAMYRELFEEVG) is the Nudix box element.

It belongs to the Nudix hydrolase family. RppH subfamily. A divalent metal cation is required as a cofactor.

Functionally, accelerates the degradation of transcripts by removing pyrophosphate from the 5'-end of triphosphorylated RNA, leading to a more labile monophosphorylated state that can stimulate subsequent ribonuclease cleavage. This chain is RNA pyrophosphohydrolase, found in Proteus mirabilis (strain HI4320).